The sequence spans 94 residues: Putative pterin-4-alpha-carbinolamine dehydratase (94 aa).

The protein belongs to the pterin-4-alpha-carbinolamine dehydratase family.

The enzyme catalyses (4aS,6R)-4a-hydroxy-L-erythro-5,6,7,8-tetrahydrobiopterin = (6R)-L-erythro-6,7-dihydrobiopterin + H2O. The protein is Putative pterin-4-alpha-carbinolamine dehydratase of Caulobacter vibrioides (strain ATCC 19089 / CIP 103742 / CB 15) (Caulobacter crescentus).